A 234-amino-acid chain; its full sequence is Interleukin-34 (234 aa).

The N-terminal stretch at 1 to 20 (MPQGLAWLRYLGILLGMALG) is a signal peptide. N-linked (GlcNAc...) asparagine glycosylation occurs at N76. Residues 191–234 (EAPQPQPRSPASAQCEAAQLYPLPQPPSTSLPRVLGPSAGPPTQ) are disordered.

Belongs to the IL-34 family. In terms of assembly, homodimer. Interacts with CSF1R.

It localises to the secreted. Cytokine that promotes the proliferation, survival and differentiation of monocytes and macrophages. Promotes the release of pro-inflammatory chemokines, and thereby plays an important role in innate immunity and in inflammatory processes. Plays an important role in the regulation of osteoclast proliferation and differentiation, and in the regulation of bone resorption. Signaling via CSF1R and its downstream effectors stimulates phosphorylation of MAPK1/ERK2 AND MAPK3/ERK1. The polypeptide is Interleukin-34 (Bos taurus (Bovine)).